Here is a 210-residue protein sequence, read N- to C-terminus: Large ribosomal subunit protein uL3 (210 aa).

The residue at position 151 (Q151) is an N5-methylglutamine.

It belongs to the universal ribosomal protein uL3 family. Part of the 50S ribosomal subunit. Forms a cluster with proteins L14 and L19. Methylated by PrmB.

Functionally, one of the primary rRNA binding proteins, it binds directly near the 3'-end of the 23S rRNA, where it nucleates assembly of the 50S subunit. This is Large ribosomal subunit protein uL3 from Aeromonas hydrophila subsp. hydrophila (strain ATCC 7966 / DSM 30187 / BCRC 13018 / CCUG 14551 / JCM 1027 / KCTC 2358 / NCIMB 9240 / NCTC 8049).